Consider the following 373-residue polypeptide: UDP-N-acetylglucosamine--N-acetylmuramyl-(pentapeptide) pyrophosphoryl-undecaprenol N-acetylglucosamine transferase (373 aa).

UDP-N-acetyl-alpha-D-glucosamine-binding positions include T10–G12, N124, S195, and Q297.

This sequence belongs to the glycosyltransferase 28 family. MurG subfamily.

The protein localises to the cell membrane. It catalyses the reaction Mur2Ac(oyl-L-Ala-gamma-D-Glu-L-Lys-D-Ala-D-Ala)-di-trans,octa-cis-undecaprenyl diphosphate + UDP-N-acetyl-alpha-D-glucosamine = beta-D-GlcNAc-(1-&gt;4)-Mur2Ac(oyl-L-Ala-gamma-D-Glu-L-Lys-D-Ala-D-Ala)-di-trans,octa-cis-undecaprenyl diphosphate + UDP + H(+). It functions in the pathway cell wall biogenesis; peptidoglycan biosynthesis. Cell wall formation. Catalyzes the transfer of a GlcNAc subunit on undecaprenyl-pyrophosphoryl-MurNAc-pentapeptide (lipid intermediate I) to form undecaprenyl-pyrophosphoryl-MurNAc-(pentapeptide)GlcNAc (lipid intermediate II). The polypeptide is UDP-N-acetylglucosamine--N-acetylmuramyl-(pentapeptide) pyrophosphoryl-undecaprenol N-acetylglucosamine transferase (Oenococcus oeni (strain ATCC BAA-331 / PSU-1)).